A 196-amino-acid polypeptide reads, in one-letter code: Small ribosomal subunit protein uS4c (196 aa).

The segment at 16 to 36 (GALPGLTRKTPKSGSNLKKKF) is disordered. Residues 89–169 (MRLDNILFRL…LPKHLTIDTL (81 aa)) form the S4 RNA-binding domain.

It belongs to the universal ribosomal protein uS4 family. As to quaternary structure, part of the 30S ribosomal subunit. Contacts protein S5. The interaction surface between S4 and S5 is involved in control of translational fidelity.

The protein localises to the plastid. Its subcellular location is the chloroplast. In terms of biological role, one of the primary rRNA binding proteins, it binds directly to 16S rRNA where it nucleates assembly of the body of the 30S subunit. Functionally, with S5 and S12 plays an important role in translational accuracy. In Cinna latifolia (Drooping woodreed), this protein is Small ribosomal subunit protein uS4c (rps4).